The chain runs to 187 residues: Large ribosomal subunit protein bL17 (187 aa).

The segment at 122–187 (PKVRSSRTST…EADAAEKSDK (66 aa)) is disordered. The segment covering 127 to 144 (SRTSTATAPAAAAPAAEA) has biased composition (low complexity). Composition is skewed to acidic residues over residues 145–157 (PAEESDVPVEETD) and 165–180 (TPAETTDEAAAEVEAD).

This sequence belongs to the bacterial ribosomal protein bL17 family. Part of the 50S ribosomal subunit. Contacts protein L32.

This Clavibacter michiganensis subsp. michiganensis (strain NCPPB 382) protein is Large ribosomal subunit protein bL17.